We begin with the raw amino-acid sequence, 250 residues long: Coproheme decarboxylase (250 aa).

Residues Arg131, 145 to 149 (YPMNK), His172, and Gln185 contribute to the Fe-coproporphyrin III site. The active site involves Tyr145.

Belongs to the ChdC family. Type 1 subfamily. Fe-coproporphyrin III is required as a cofactor.

It carries out the reaction Fe-coproporphyrin III + 2 H2O2 + 2 H(+) = heme b + 2 CO2 + 4 H2O. It catalyses the reaction Fe-coproporphyrin III + H2O2 + H(+) = harderoheme III + CO2 + 2 H2O. The enzyme catalyses harderoheme III + H2O2 + H(+) = heme b + CO2 + 2 H2O. It participates in porphyrin-containing compound metabolism; protoheme biosynthesis. Involved in coproporphyrin-dependent heme b biosynthesis. Catalyzes the decarboxylation of Fe-coproporphyrin III (coproheme) to heme b (protoheme IX), the last step of the pathway. The reaction occurs in a stepwise manner with a three-propionate intermediate. This is Coproheme decarboxylase from Staphylococcus aureus (strain Mu50 / ATCC 700699).